We begin with the raw amino-acid sequence, 375 residues long: Succinyl-diaminopimelate desuccinylase (375 aa).

Residue histidine 66 coordinates Zn(2+). Aspartate 68 is a catalytic residue. Residue aspartate 99 participates in Zn(2+) binding. Glutamate 133 functions as the Proton acceptor in the catalytic mechanism. Glutamate 134, glutamate 162, and histidine 348 together coordinate Zn(2+).

This sequence belongs to the peptidase M20A family. DapE subfamily. Homodimer. Zn(2+) serves as cofactor. It depends on Co(2+) as a cofactor.

It carries out the reaction N-succinyl-(2S,6S)-2,6-diaminopimelate + H2O = (2S,6S)-2,6-diaminopimelate + succinate. The protein operates within amino-acid biosynthesis; L-lysine biosynthesis via DAP pathway; LL-2,6-diaminopimelate from (S)-tetrahydrodipicolinate (succinylase route): step 3/3. Its function is as follows. Catalyzes the hydrolysis of N-succinyl-L,L-diaminopimelic acid (SDAP), forming succinate and LL-2,6-diaminopimelate (DAP), an intermediate involved in the bacterial biosynthesis of lysine and meso-diaminopimelic acid, an essential component of bacterial cell walls. This is Succinyl-diaminopimelate desuccinylase from Janthinobacterium sp. (strain Marseille) (Minibacterium massiliensis).